Here is a 213-residue protein sequence, read N- to C-terminus: LexA repressor (213 aa).

The segment at residues 29-49 (RAEIAQALGFRSPNAAEDHLK) is a DNA-binding region (H-T-H motif). Residues Ser-131 and Lys-168 each act as for autocatalytic cleavage activity in the active site.

The protein belongs to the peptidase S24 family. In terms of assembly, homodimer.

The catalysed reaction is Hydrolysis of Ala-|-Gly bond in repressor LexA.. Its function is as follows. Represses a number of genes involved in the response to DNA damage (SOS response), including recA and lexA. In the presence of single-stranded DNA, RecA interacts with LexA causing an autocatalytic cleavage which disrupts the DNA-binding part of LexA, leading to derepression of the SOS regulon and eventually DNA repair. The sequence is that of LexA repressor from Bordetella avium (strain 197N).